Reading from the N-terminus, the 371-residue chain is 4-hydroxyphenylpyruvate dioxygenase-like protein (371 aa).

VOC domains lie at 7–135 and 160–328; these read RLCH…LLER and RVDH…VFTK. Fe cation contacts are provided by His163, His258, and Glu339.

Belongs to the 4HPPD family. Requires Fe cation as cofactor.

The protein localises to the mitochondrion. It carries out the reaction 3-(4-hydroxyphenyl)pyruvate + O2 = (S)-4-hydroxymandelate + CO2. In terms of biological role, iron-dependent dioxygenase that catalyzes the conversion of 4-hydroxyphenylpyruvate (4-HPPA) to 4-hydroxymandelate (4-HMA) in the mitochondria, one of the steps in the biosynthesis of coenzyme Q10 from tyrosine. This chain is 4-hydroxyphenylpyruvate dioxygenase-like protein, found in Homo sapiens (Human).